The sequence spans 419 residues: Multifunctional CCA protein (419 aa).

The ATP site is built by Gly-8 and Arg-11. CTP contacts are provided by Gly-8 and Arg-11. Residues Asp-21 and Asp-23 each contribute to the Mg(2+) site. Arg-91, Arg-137, and Arg-140 together coordinate ATP. Residues Arg-91, Arg-137, and Arg-140 each coordinate CTP. An HD domain is found at 226-327 (TGVHLMMVLD…VRLFDRCDAW (102 aa)).

This sequence belongs to the tRNA nucleotidyltransferase/poly(A) polymerase family. Bacterial CCA-adding enzyme type 1 subfamily. Monomer. Can also form homodimers and oligomers. It depends on Mg(2+) as a cofactor. The cofactor is Ni(2+).

The enzyme catalyses a tRNA precursor + 2 CTP + ATP = a tRNA with a 3' CCA end + 3 diphosphate. It catalyses the reaction a tRNA with a 3' CCA end + 2 CTP + ATP = a tRNA with a 3' CCACCA end + 3 diphosphate. Catalyzes the addition and repair of the essential 3'-terminal CCA sequence in tRNAs without using a nucleic acid template. Adds these three nucleotides in the order of C, C, and A to the tRNA nucleotide-73, using CTP and ATP as substrates and producing inorganic pyrophosphate. tRNA 3'-terminal CCA addition is required both for tRNA processing and repair. Also involved in tRNA surveillance by mediating tandem CCA addition to generate a CCACCA at the 3' terminus of unstable tRNAs. While stable tRNAs receive only 3'-terminal CCA, unstable tRNAs are marked with CCACCA and rapidly degraded. The chain is Multifunctional CCA protein from Leptothrix cholodnii (strain ATCC 51168 / LMG 8142 / SP-6) (Leptothrix discophora (strain SP-6)).